The chain runs to 156 residues: Small ribosomal subunit protein uS7 (156 aa).

It belongs to the universal ribosomal protein uS7 family. In terms of assembly, part of the 30S ribosomal subunit. Contacts proteins S9 and S11.

Its function is as follows. One of the primary rRNA binding proteins, it binds directly to 16S rRNA where it nucleates assembly of the head domain of the 30S subunit. Is located at the subunit interface close to the decoding center, probably blocks exit of the E-site tRNA. The protein is Small ribosomal subunit protein uS7 of Bacillus velezensis (strain DSM 23117 / BGSC 10A6 / LMG 26770 / FZB42) (Bacillus amyloliquefaciens subsp. plantarum).